The sequence spans 62 residues: Metallothionein-4 (62 aa).

20 residues coordinate a divalent metal cation: Cys-6, Cys-8, Cys-14, Cys-16, Cys-20, Cys-22, Cys-25, Cys-27, Cys-30, Cys-34, Cys-35, Cys-37, Cys-38, Cys-42, Cys-45, Cys-49, Cys-51, Cys-58, Cys-60, and Cys-61.

The protein belongs to the metallothionein superfamily. Type 1 family.

Functionally, seems to bind zinc and copper. Could play a special role in regulating zinc metabolism during the differentiation of stratified epithelia. The protein is Metallothionein-4 (MT4) of Canis lupus familiaris (Dog).